The following is a 444-amino-acid chain: Acyl-CoA 6-desaturase (444 aa).

The Cytoplasmic portion of the chain corresponds to 1 to 122 (MGKGGNQDEG…FRALRKTAED (122 aa)). In terms of domain architecture, Cytochrome b5 heme-binding spans 18 to 95 (MPTFRWEEIQ…MKPLLIGELA (78 aa)). A helical membrane pass occupies residues 123 to 143 (MNLFKSNQLFFLLHLAHIIAM). Topologically, residues 144 to 147 (ESIA) are lumenal. A helical transmembrane segment spans residues 148 to 168 (WFTLFYFGNGWIPTIITAFVL). Residues 169 to 264 (ATSQAQAGWL…KYLPYNHQHE (96 aa)) are Cytoplasmic-facing. Residues 180-184 (HDYGH) carry the Histidine box-1 motif. The short motif at 217-221 (HFQHH) is the Histidine box-2 element. A helical membrane pass occupies residues 265 to 285 (YFFLIGPPLLIPLYFQYQIIM). The Lumenal segment spans residues 286–305 (TMIVRKYWADLAWAISYYTR). A helical membrane pass occupies residues 306 to 326 (FFITYIPFYGVLGSILFLNFI). The Cytoplasmic segment spans residues 327–444 (RFLESHWFVW…QLWLDAYLHK (118 aa)). The Histidine box-3 signature appears at 382–386 (QIEHH).

The protein belongs to the fatty acid desaturase type 1 family.

The protein resides in the endoplasmic reticulum membrane. The enzyme catalyses (9Z,12Z)-octadecadienoyl-CoA + 2 Fe(II)-[cytochrome b5] + O2 + 2 H(+) = (6Z,9Z,12Z)-octadecatrienoyl-CoA + 2 Fe(III)-[cytochrome b5] + 2 H2O. It carries out the reaction (9Z,12Z,15Z)-octadecatrienoyl-CoA + 2 Fe(II)-[cytochrome b5] + O2 + 2 H(+) = (6Z,9Z,12Z,15Z)-octadecatetraenoyl-CoA + 2 Fe(III)-[cytochrome b5] + 2 H2O. It catalyses the reaction (9Z,12Z,15Z,18Z,21Z)-tetracosapentaenoyl-CoA + 2 Fe(II)-[cytochrome b5] + O2 + 2 H(+) = (6Z,9Z,12Z,15Z,18Z,21Z)-tetracosahexaenoyl-CoA + 2 Fe(III)-[cytochrome b5] + 2 H2O. The catalysed reaction is (11E)-octadecenoyl-CoA + 2 Fe(II)-[cytochrome b5] + O2 + 2 H(+) = (6Z,11E)-octadecadienoyl-CoA + 2 Fe(III)-[cytochrome b5] + 2 H2O. The enzyme catalyses (11Z,14Z)-eicosadienoyl-CoA + 2 Fe(II)-[cytochrome b5] + O2 + 2 H(+) = (8Z,11Z,14Z)-eicosatrienoyl-CoA + 2 Fe(III)-[cytochrome b5] + 2 H2O. It carries out the reaction (11Z,14Z,17Z)-eicosatrienoyl-CoA + 2 Fe(II)-[cytochrome b5] + O2 + 2 H(+) = (8Z,11Z,14Z,17Z)-eicosatetraenoyl-CoA + 2 Fe(III)-[cytochrome b5] + 2 H2O. Its pathway is lipid metabolism; polyunsaturated fatty acid biosynthesis. Involved in the biosynthesis of highly unsaturated fatty acids (HUFA) from the essential polyunsaturated fatty acids (PUFA) linoleic acid (LA) (18:2n-6) and alpha-linolenic acid (ALA) (18:3n-3) precursors, acting as a fatty acyl-coenzyme A (CoA) desaturase that introduces a cis double bond at carbon 6 of the fatty acyl chain. Catalyzes the first and rate limiting step in this pathway which is the desaturation of LA (18:2n-6) and ALA (18:3n-3) into gamma-linoleate (GLA) (18:3n-6) and stearidonate (18:4n-3), respectively. Subsequently, in the biosynthetic pathway of HUFA n-3 series, it desaturates tetracosapentaenoate (24:5n-3) to tetracosahexaenoate (24:6n-3), which is then converted to docosahexaenoate (DHA)(22:6n-3), an important lipid for nervous system function. It can also desaturate (11E)-octadecenoate (trans-vaccenoate, a metabolite in the biohydrogenation pathway of LA and the predominant trans fatty acid in cow milk) at carbon 6 generating (6Z,11E)-octadecadienoate. In addition to Delta-6 activity, this enzyme exhibits Delta-8 activity with slight biases toward n-3 fatty acyl-CoA substrates. The sequence is that of Acyl-CoA 6-desaturase (FADS2) from Bos taurus (Bovine).